A 198-amino-acid polypeptide reads, in one-letter code: Nucleoid occlusion factor SlmA (198 aa).

One can recognise an HTH tetR-type domain in the interval 9–70 (RNRREEILQA…SLIEFIEDTL (62 aa)). The segment at residues 33 to 52 (TTAKLAANVGVSEAALYRHF) is a DNA-binding region (H-T-H motif). A coiled-coil region spans residues 117–144 (EQDRLQGRINQLFERIEAQLRQVLKERR).

This sequence belongs to the nucleoid occlusion factor SlmA family. As to quaternary structure, homodimer. Interacts with FtsZ.

It localises to the cytoplasm. The protein resides in the nucleoid. In terms of biological role, required for nucleoid occlusion (NO) phenomenon, which prevents Z-ring formation and cell division over the nucleoid. Acts as a DNA-associated cell division inhibitor that binds simultaneously chromosomal DNA and FtsZ, and disrupts the assembly of FtsZ polymers. SlmA-DNA-binding sequences (SBS) are dispersed on non-Ter regions of the chromosome, preventing FtsZ polymerization at these regions. The chain is Nucleoid occlusion factor SlmA from Edwardsiella ictaluri (strain 93-146).